Reading from the N-terminus, the 196-residue chain is Kunitz trypsin inhibitor 5 (196 aa).

The signal sequence occupies residues 1-19; it reads MSSLLYIFLLLAVFISHRG. The cysteines at positions 156 and 167 are disulfide-linked.

The protein belongs to the protease inhibitor I3 (leguminous Kunitz-type inhibitor) family.

The protein localises to the endoplasmic reticulum. Functionally, can inhibit both serine proteases and cysteine proteases. May be involved in the modulation of the proteases that participate in the hydrolysis of dietary proteins in the gut of spider mites. This Arabidopsis thaliana (Mouse-ear cress) protein is Kunitz trypsin inhibitor 5.